The following is a 324-amino-acid chain: O-ureido-L-serine synthase (324 aa).

K43 is subject to N6-(pyridoxal phosphate)lysine. Residues N73, 177-181 (GTTGT), and S265 each bind pyridoxal 5'-phosphate.

The protein belongs to the cysteine synthase/cystathionine beta-synthase family. As to quaternary structure, homotetramer. Requires pyridoxal 5'-phosphate as cofactor.

The catalysed reaction is hydroxyurea + O-acetyl-L-serine = O-ureido-L-serine + acetate + H(+). It carries out the reaction O-acetyl-L-serine + hydrogen sulfide = L-cysteine + acetate. In terms of biological role, involved in the biosynthesis of the antibiotic D-cycloserine (DCS), a cyclic structural analog of D-alanine, used as an antitubercular agent. Catalyzes the addition of hydroxyurea on O-acetyl-L-serine (OAS) to yield O-ureido-L-serine. It prefers sulfide as the second substrate, followed by hydroxyurea, L-homocysteine, and thiosulfate. This chain is O-ureido-L-serine synthase, found in Streptomyces lavendulae.